The primary structure comprises 391 residues: Aspartate carbamoyltransferase 3, chloroplastic (391 aa).

The transit peptide at 1-69 (MTASSSLFSC…SKCDKMIKTR (69 aa)) directs the protein to the chloroplast. Carbamoyl phosphate contacts are provided by Arg-137 and Thr-138. Residues Arg-137 and Thr-138 each contribute to the UMP site. Lys-167 provides a ligand contact to L-aspartate. Residues Arg-188, His-216, and Gln-219 each contribute to the carbamoyl phosphate site. UMP contacts are provided by Arg-188 and His-216. Residues Arg-249 and Arg-311 each contribute to the UMP site. Residues Arg-249 and Arg-311 each contribute to the L-aspartate site. Residues Leu-351 and Pro-352 each coordinate carbamoyl phosphate.

Belongs to the aspartate/ornithine carbamoyltransferase superfamily. ATCase family. As to quaternary structure, homotrimer.

Its subcellular location is the plastid. The protein resides in the chloroplast. The catalysed reaction is carbamoyl phosphate + L-aspartate = N-carbamoyl-L-aspartate + phosphate + H(+). Its pathway is pyrimidine metabolism; UMP biosynthesis via de novo pathway; (S)-dihydroorotate from bicarbonate: step 2/3. Feedback inhibited by UMP. In terms of biological role, catalyzes the condensation of carbamoyl phosphate and aspartate to form carbamoyl aspartate and inorganic phosphate, the committed step in the de novo pyrimidine nucleotide biosynthesis pathway. This is Aspartate carbamoyltransferase 3, chloroplastic (PYRB3) from Pisum sativum (Garden pea).